The chain runs to 279 residues: Acetylglutamate kinase (279 aa).

Substrate contacts are provided by residues 64–65 (GG), arginine 86, and asparagine 177.

The protein belongs to the acetylglutamate kinase family. ArgB subfamily.

It is found in the cytoplasm. It carries out the reaction N-acetyl-L-glutamate + ATP = N-acetyl-L-glutamyl 5-phosphate + ADP. The protein operates within amino-acid biosynthesis; L-arginine biosynthesis; N(2)-acetyl-L-ornithine from L-glutamate: step 2/4. Catalyzes the ATP-dependent phosphorylation of N-acetyl-L-glutamate. In Campylobacter jejuni subsp. doylei (strain ATCC BAA-1458 / RM4099 / 269.97), this protein is Acetylglutamate kinase.